The chain runs to 131 residues: Glycine cleavage system H protein (131 aa).

The 83-residue stretch at R24–E106 folds into the Lipoyl-binding domain. K65 is modified (N6-lipoyllysine).

Belongs to the GcvH family. In terms of assembly, the glycine cleavage system is composed of four proteins: P, T, L and H. The cofactor is (R)-lipoate.

Its function is as follows. The glycine cleavage system catalyzes the degradation of glycine. The H protein shuttles the methylamine group of glycine from the P protein to the T protein. The sequence is that of Glycine cleavage system H protein from Xanthomonas axonopodis pv. citri (strain 306).